A 296-amino-acid chain; its full sequence is Ribosomal RNA small subunit methyltransferase H (296 aa).

Residues Gly38–His40, Glu57, Phe88, Asp103, and His110 each bind S-adenosyl-L-methionine.

Belongs to the methyltransferase superfamily. RsmH family.

It is found in the cytoplasm. The enzyme catalyses cytidine(1402) in 16S rRNA + S-adenosyl-L-methionine = N(4)-methylcytidine(1402) in 16S rRNA + S-adenosyl-L-homocysteine + H(+). In terms of biological role, specifically methylates the N4 position of cytidine in position 1402 (C1402) of 16S rRNA. This is Ribosomal RNA small subunit methyltransferase H from Borreliella burgdorferi (strain ZS7) (Borrelia burgdorferi).